The primary structure comprises 1288 residues: Symplekin (1288 aa).

The tract at residues 1-124 (MASSSGDSVT…NMLLRDENVN (124 aa)) is interaction with HSF1. Serine 13 carries the post-translational modification Phosphoserine. HEAT repeat units follow at residues 31–64 (TTSE…LIIN), 67–101 (PTLL…EACK), 104–146 (IELL…WMVK), 153–192 (LQEA…GLIV), and 227–266 (VLWE…IARQ). Positions 335 to 392 (IARNMPSSKDSRKRPRDDTDSTLKKMKLEPNLGEDDEDKDLEPGPSGTSKASAQISGQ) are disordered. Positions 345–360 (SRKRPRDDTDSTLKKM) match the Nuclear localization signal motif. A compositionally biased stretch (basic and acidic residues) spans 349–362 (PRDDTDSTLKKMKL). Lysine 361 participates in a covalent cross-link: Glycyl lysine isopeptide (Lys-Gly) (interchain with G-Cter in SUMO1); alternate. A Glycyl lysine isopeptide (Lys-Gly) (interchain with G-Cter in SUMO2); alternate cross-link involves residue lysine 361. Polar residues predominate over residues 380–392 (SGTSKASAQISGQ). Lysine 483 is covalently cross-linked (Glycyl lysine isopeptide (Lys-Gly) (interchain with G-Cter in SUMO2)). Residue serine 494 is modified to Phosphoserine. 2 disordered regions span residues 1130-1151 (PAPA…PPQD) and 1163-1288 (LKRQ…KGNS). Over residues 1131-1149 (APAPAPAPAPAPAPAPRPP) the composition is skewed to pro residues. Basic and acidic residues predominate over residues 1163–1173 (LKRQLEEEQKQ). Phosphoserine is present on residues serine 1238 and serine 1239. A Glycyl lysine isopeptide (Lys-Gly) (interchain with G-Cter in SUMO1) cross-link involves residue lysine 1256. Residue serine 1260 is modified to Phosphoserine. Positions 1267 to 1288 (AVEEALKTSSPETREPESKGNS) are enriched in basic and acidic residues. Threonine 1274 is modified (phosphothreonine). The residue at position 1276 (serine 1276) is a Phosphoserine.

This sequence belongs to the Symplekin family. Found in a heat-sensitive complex at least composed of several cleavage and polyadenylation specific and cleavage stimulation factors. Interacts with CPSF2, CPSF3 and CSTF2. Interacts (via N-terminus) with HSF1; this interaction is direct and occurs upon heat shock. Interacts with SSU72.

It localises to the cytoplasm. The protein localises to the cytoskeleton. The protein resides in the cell junction. It is found in the tight junction. Its subcellular location is the cell membrane. It localises to the nucleus. The protein localises to the nucleoplasm. In terms of biological role, scaffold protein that functions as a component of a multimolecular complex involved in histone mRNA 3'-end processing. Specific component of the tight junction (TJ) plaque, but might not be an exclusively junctional component. May have a house-keeping rule. Is involved in pre-mRNA polyadenylation. Enhances SSU72 phosphatase activity. In Mus musculus (Mouse), this protein is Symplekin (Sympk).